Reading from the N-terminus, the 546-residue chain is Putative serine hydroxymethyltransferase, mitochondrial (546 aa).

Residues 1–64 (MSSFQSTAAV…RFSSSSIAND (64 aa)) constitute a mitochondrion transit peptide. The residue at position 305 (Lys-305) is an N6-(pyridoxal phosphate)lysine.

This sequence belongs to the SHMT family. As to quaternary structure, homotetramer. Requires pyridoxal 5'-phosphate as cofactor.

The protein resides in the mitochondrion. The catalysed reaction is (6R)-5,10-methylene-5,6,7,8-tetrahydrofolate + glycine + H2O = (6S)-5,6,7,8-tetrahydrofolate + L-serine. The protein operates within one-carbon metabolism; tetrahydrofolate interconversion. Its function is as follows. Interconversion of serine and glycine. The protein is Putative serine hydroxymethyltransferase, mitochondrial (cbs-2) of Neurospora crassa (strain ATCC 24698 / 74-OR23-1A / CBS 708.71 / DSM 1257 / FGSC 987).